Reading from the N-terminus, the 299-residue chain is MKVVKEFSVCGGRLIKLSHNSNSTKTSMNVNIYLPKHYYAQDFPRNKRIPTVFYLSGLTCTPDNASEKAFWQFQADKYGFAIVFPDTSPRGDEVANDPEGSWDFGQGAGFYLNATQEPYAQHYQMYDYIHKELPQTLDSHFNKNGDVKLDFLDNVAITGHSMGGYGAICGYLKGYSGKRYKSCSAFAPIVNPSNVPWGQKAFKGYLGEEKAQWEAYDPCLLIKNIRHVGDDRILIHVGDSDPFLEEHLKPELLLEAVKATSWQDYVEIKKVHGFDHSYYFVSTFVPEHAEFHARNLGLI.

Positions 1 and 140 each coordinate Cu cation. Active-site charge relay system residues include Ser161, Asp241, and His276.

It belongs to the esterase D family. In terms of assembly, monomer.

It is found in the cytoplasm. It carries out the reaction S-formylglutathione + H2O = formate + glutathione + H(+). Functionally, serine hydrolase involved in the detoxification of formaldehyde. The protein is S-formylglutathione hydrolase of Saccharomyces cerevisiae (strain ATCC 204508 / S288c) (Baker's yeast).